We begin with the raw amino-acid sequence, 241 residues long: Leucyl/phenylalanyl-tRNA--protein transferase (241 aa).

This sequence belongs to the L/F-transferase family.

The protein localises to the cytoplasm. The enzyme catalyses N-terminal L-lysyl-[protein] + L-leucyl-tRNA(Leu) = N-terminal L-leucyl-L-lysyl-[protein] + tRNA(Leu) + H(+). It carries out the reaction N-terminal L-arginyl-[protein] + L-leucyl-tRNA(Leu) = N-terminal L-leucyl-L-arginyl-[protein] + tRNA(Leu) + H(+). The catalysed reaction is L-phenylalanyl-tRNA(Phe) + an N-terminal L-alpha-aminoacyl-[protein] = an N-terminal L-phenylalanyl-L-alpha-aminoacyl-[protein] + tRNA(Phe). Functionally, functions in the N-end rule pathway of protein degradation where it conjugates Leu, Phe and, less efficiently, Met from aminoacyl-tRNAs to the N-termini of proteins containing an N-terminal arginine or lysine. The protein is Leucyl/phenylalanyl-tRNA--protein transferase of Neisseria meningitidis serogroup C (strain 053442).